The primary structure comprises 77 residues: MKLIIFTGLVLFAIVSLIEVQADNERACLPQYQVCTDAPGNCCSNLVCNCYGRYKSGARIGRNCFCLQKGVIYKREN.

The N-terminal stretch at 1-20 is a signal peptide; that stretch reads MKLIIFTGLVLFAIVSLIEV. Positions 21 to 26 are excised as a propeptide; it reads QADNER.

It belongs to the neurotoxin 19 (CSTX) family. 08 (U8-Lctx) subfamily. Contains 4 disulfide bonds. Expressed by the venom gland.

It localises to the secreted. The sequence is that of U8-lycotoxin-Ls1g from Lycosa singoriensis (Wolf spider).